The primary structure comprises 685 residues: Methionine--tRNA ligase (685 aa).

The Zn(2+) site is built by cysteine 142, cysteine 145, cysteine 155, and cysteine 158. Residues 330–334 carry the 'KMSKS' region motif; it reads KMSKS. An ATP-binding site is contributed by lysine 333. Residues 584 to 685 form the tRNA-binding domain; sequence DFIKVDLRVA…SGAKPGDKVS (102 aa).

The protein belongs to the class-I aminoacyl-tRNA synthetase family. MetG type 1 subfamily. As to quaternary structure, homodimer. Requires Zn(2+) as cofactor.

The protein localises to the cytoplasm. The enzyme catalyses tRNA(Met) + L-methionine + ATP = L-methionyl-tRNA(Met) + AMP + diphosphate. Is required not only for elongation of protein synthesis but also for the initiation of all mRNA translation through initiator tRNA(fMet) aminoacylation. The protein is Methionine--tRNA ligase of Acinetobacter baylyi (strain ATCC 33305 / BD413 / ADP1).